Reading from the N-terminus, the 247-residue chain is Uridylate kinase (247 aa).

18–21 (KLSG) serves as a coordination point for ATP. G60 is a UMP binding site. ATP-binding residues include G61 and R65. UMP is bound by residues D80 and 141–148 (TGNPFFTT). 3 residues coordinate ATP: T168, Y174, and D177.

It belongs to the UMP kinase family. In terms of assembly, homohexamer.

It localises to the cytoplasm. It carries out the reaction UMP + ATP = UDP + ADP. Its pathway is pyrimidine metabolism; CTP biosynthesis via de novo pathway; UDP from UMP (UMPK route): step 1/1. With respect to regulation, inhibited by UTP. Its function is as follows. Catalyzes the reversible phosphorylation of UMP to UDP. This Stutzerimonas stutzeri (strain A1501) (Pseudomonas stutzeri) protein is Uridylate kinase.